A 168-amino-acid chain; its full sequence is Protein archease (168 aa).

N-acetylalanine is present on Ala2. Positions 39, 167, and 168 each coordinate Ca(2+).

Belongs to the archease family. Component of the tRNA-splicing ligase complex.

Its function is as follows. Component of the tRNA-splicing ligase complex required to facilitate the enzymatic turnover of catalytic subunit RTCB. Together with DDX1, acts by facilitating the guanylylation of RTCB, a key intermediate step in tRNA ligation. In Mus musculus (Mouse), this protein is Protein archease (Zbtb8os).